A 276-amino-acid polypeptide reads, in one-letter code: NH(3)-dependent NAD(+) synthetase (276 aa).

43-50 lines the ATP pocket; the sequence is GISGGVDS. Residue Asp-49 coordinates Mg(2+). Arg-146 serves as a coordination point for deamido-NAD(+). Thr-166 provides a ligand contact to ATP. A Mg(2+)-binding site is contributed by Glu-171. 2 residues coordinate deamido-NAD(+): Lys-179 and Asp-186. The ATP site is built by Lys-195 and Thr-217. 266 to 267 provides a ligand contact to deamido-NAD(+); that stretch reads HK.

It belongs to the NAD synthetase family. In terms of assembly, homodimer.

The catalysed reaction is deamido-NAD(+) + NH4(+) + ATP = AMP + diphosphate + NAD(+) + H(+). Its pathway is cofactor biosynthesis; NAD(+) biosynthesis; NAD(+) from deamido-NAD(+) (ammonia route): step 1/1. Functionally, catalyzes the ATP-dependent amidation of deamido-NAD to form NAD. Uses ammonia as a nitrogen source. The sequence is that of NH(3)-dependent NAD(+) synthetase from Vibrio atlanticus (strain LGP32) (Vibrio splendidus (strain Mel32)).